The following is an 875-amino-acid chain: MSNTYFYSDEEIYNLLRPYVAKWFRQKYTTFTPPQRAAIPLIKQNYNVLVSSPTGSGKTLAAFLGILDSLFELGDNNELEDKVYAIYISPLRALNNDMQRNLLEPLNELRQVNSKLPDVRVGIRTSDTTPYEKQKMLKKPPHILITTPESFGISITSPKFSQKLTDVKWIIVDEIHELANSKRGAYLSAMLELFRNLITKKEFVRIGLSATVSPLEEVAQFLVGKDREYRIVDARFVKPVDIKVISPVKDLVHSSESEVDKGIYKTILNEVKKHRTTLIFTNTRHATERVAYKLRKLAENEKVFDVDAIEAHHSSLSRDVRLDVEEKLKKGILKVVVSSTSLELGIDIGYIDLVILLSSPKSVSRLLQRIGRAGHHIRSISKGRVIVVDRDDLVECSVLAKLARDRKIDSIHIPKNPLDVLSQIIVSASLISPIDRDDLFKILRRSYNFSDLSESDYSLVLRYLSGDFFGVELKNVYAKIRIKEEKIIYPKKGSRLIFYTNSGTIPDEAMISVVTENNRYVGNLEEEFVEILSPGDIFVLSGRTYEFIGSKGSKVIVKEAMGQRPTVPSWFSEMLPLAYESALEIGKFRREIAEMIKKGVTHNEIIESISKEYEIDKHASMSIYTYILEQYLFTNGKVPSDNLILIEIYDDEEGIRNYIFHALYGRRALDALSRAFAYVVSEELDTDVRVSVTDNGFALSVKRDVPFDYNIKSLFEKITPDNVYDIVTRAVMRTEMLKRRFRHCAERSFMILRRYKGRETNLERRELNSEILLKAIREIGNFPVMKETIREILEDHMDILRAKEILKKIASQEIKVDVFGPTNIPSPFSHSIILKGHSDVVLAEDRRELLKKLHERVVEFLRQKGVNIELEYTSV.

Residues Q35, K58, T59, D173, E174, I355, R372, and H375 each coordinate ATP. The region spanning 39 to 230 (IPLIKQNYNV…FLVGKDREYR (192 aa)) is the Helicase ATP-binding domain. A DEIH box motif is present at residues 173 to 176 (DEIH). Residues 247–419 (PVKDLVHSSE…SIHIPKNPLD (173 aa)) form the Helicase C-terminal domain. The interval 420–506 (VLSQIIVSAS…IFYTNSGTIP (87 aa)) is WH domain. A domain 4 region spans residues 507–875 (DEAMISVVTE…VNIELEYTSV (369 aa)).

Belongs to the Lhr helicase family. Lhr-Core subfamily. As to quaternary structure, monomer and homodimer. The monomeric form has helicase, ATPase and strand annealing activities, while the dimeric form only has ATPAse and strand annealing activities. Interacts with DNA topoisomerase 3 (topA).

The catalysed reaction is Couples ATP hydrolysis with the unwinding of duplex DNA by translocating in the 3'-5' direction.. It catalyses the reaction ATP + H2O = ADP + phosphate + H(+). DNA topoisomerase 3 (topA) inhibits helicase activity on Holliday junctions (HJ) but has no effect on ATPase activity. Its function is as follows. DNA helicase that translocates in a 3'-5' direction on single-stranded (ss)DNA, probably involved in DNA repair. Unwinds DNA in a 3'-5' direction, unwinding is ATP-dependent, acts preferentially on fork and 3'-tailed DNA; bubble and blunt-ended double-stranded (ds)DNA are not substrates. Has winding and unwinding activity, unwinds Holliday junction (HJ) DNA in the presence of ATP, the main product is forked DNA, single-stranded binding protein (SSB) does not stimulate activity. Anneals complementary oligonucleotides in an ATP-independent manner to form HJ and fork structures, thus can perform strand exchange. Preferentially binds HJ, forked and ssDNA, dsDNA is bound less well. LhrC-Core (Hel112) inhibits the exonuclease activity of the HerA-NurA complex on ss- and dsDNA, has no effect on ssDNA nicking by NurA; HerA-NurA are involved in DNA end-resection during DNA double-strand break repair. The protein is ATP-dependent helicase Lhr-Core of Saccharolobus solfataricus (strain ATCC 35092 / DSM 1617 / JCM 11322 / P2) (Sulfolobus solfataricus).